The following is a 338-amino-acid chain: Heat-inducible transcription repressor HrcA (338 aa).

It belongs to the HrcA family.

Functionally, negative regulator of class I heat shock genes (grpE-dnaK-dnaJ and groELS operons). Prevents heat-shock induction of these operons. The chain is Heat-inducible transcription repressor HrcA from Streptomyces albus G.